We begin with the raw amino-acid sequence, 153 residues long: MTDTRNLTQLGSKTQAPASPEAATLETAPFSRGDGPAAIVRFTCPEFTSLCPVTGQPDFAHIVIDYAPDKLLVESKSLKLFLTSFRNHGAFHEDCTVMIGRRIVEATKPLWLRIGGYWYPRGGIPIDVFWQTGTPPKDAWVPETGVPPYRGRG.

The segment covering 1 to 17 has biased composition (polar residues); it reads MTDTRNLTQLGSKTQAP. Residues 1–23 form a disordered region; the sequence is MTDTRNLTQLGSKTQAPASPEAA. The active-site Thioimide intermediate is the Cys51. The active-site Proton donor is the Asp58. Residues 73 to 75 and 92 to 93 each bind substrate; these read VES and HE.

Belongs to the GTP cyclohydrolase I family. QueF type 1 subfamily.

It is found in the cytoplasm. The catalysed reaction is 7-aminomethyl-7-carbaguanine + 2 NADP(+) = 7-cyano-7-deazaguanine + 2 NADPH + 3 H(+). Its pathway is tRNA modification; tRNA-queuosine biosynthesis. Functionally, catalyzes the NADPH-dependent reduction of 7-cyano-7-deazaguanine (preQ0) to 7-aminomethyl-7-deazaguanine (preQ1). This is NADPH-dependent 7-cyano-7-deazaguanine reductase from Chelativorans sp. (strain BNC1).